A 329-amino-acid polypeptide reads, in one-letter code: Beta-ketoacyl-[acyl-carrier-protein] synthase III (329 aa).

Active-site residues include C123 and H256. The segment at 257–261 (QANIR) is ACP-binding. The active site involves N286.

This sequence belongs to the thiolase-like superfamily. FabH family. As to quaternary structure, homodimer.

It is found in the cytoplasm. It carries out the reaction malonyl-[ACP] + acetyl-CoA + H(+) = 3-oxobutanoyl-[ACP] + CO2 + CoA. Its pathway is lipid metabolism; fatty acid biosynthesis. In terms of biological role, catalyzes the condensation reaction of fatty acid synthesis by the addition to an acyl acceptor of two carbons from malonyl-ACP. Catalyzes the first condensation reaction which initiates fatty acid synthesis and may therefore play a role in governing the total rate of fatty acid production. Possesses both acetoacetyl-ACP synthase and acetyl transacylase activities. Its substrate specificity determines the biosynthesis of branched-chain and/or straight-chain of fatty acids. This is Beta-ketoacyl-[acyl-carrier-protein] synthase III from Burkholderia cenocepacia (strain HI2424).